We begin with the raw amino-acid sequence, 440 residues long: Proline--tRNA ligase (440 aa).

This sequence belongs to the class-II aminoacyl-tRNA synthetase family. ProS type 2 subfamily. In terms of assembly, homodimer.

It localises to the cytoplasm. It catalyses the reaction tRNA(Pro) + L-proline + ATP = L-prolyl-tRNA(Pro) + AMP + diphosphate. Its function is as follows. Catalyzes the attachment of proline to tRNA(Pro) in a two-step reaction: proline is first activated by ATP to form Pro-AMP and then transferred to the acceptor end of tRNA(Pro). This is Proline--tRNA ligase from Azorhizobium caulinodans (strain ATCC 43989 / DSM 5975 / JCM 20966 / LMG 6465 / NBRC 14845 / NCIMB 13405 / ORS 571).